A 366-amino-acid polypeptide reads, in one-letter code: Anhydro-N-acetylmuramic acid kinase (366 aa).

Residue 10 to 17 (GTSMDGID) coordinates ATP.

This sequence belongs to the anhydro-N-acetylmuramic acid kinase family.

The enzyme catalyses 1,6-anhydro-N-acetyl-beta-muramate + ATP + H2O = N-acetyl-D-muramate 6-phosphate + ADP + H(+). The protein operates within amino-sugar metabolism; 1,6-anhydro-N-acetylmuramate degradation. It participates in cell wall biogenesis; peptidoglycan recycling. Its function is as follows. Catalyzes the specific phosphorylation of 1,6-anhydro-N-acetylmuramic acid (anhMurNAc) with the simultaneous cleavage of the 1,6-anhydro ring, generating MurNAc-6-P. Is required for the utilization of anhMurNAc either imported from the medium or derived from its own cell wall murein, and thus plays a role in cell wall recycling. The protein is Anhydro-N-acetylmuramic acid kinase of Legionella pneumophila (strain Lens).